The chain runs to 286 residues: 4-hydroxybenzoate octaprenyltransferase (286 aa).

7 helical membrane passes run 21-40, 95-115, 142-162, 167-187, 210-230, 235-255, and 266-286; these read GTLL…AGGM, ILFV…NGLV, FLGI…TGEV, WWLF…YAMV, QIIG…GWSA, LYGL…MLIF, and FLNN…DYLI.

This sequence belongs to the UbiA prenyltransferase family. Mg(2+) is required as a cofactor.

The protein localises to the cell inner membrane. The catalysed reaction is all-trans-octaprenyl diphosphate + 4-hydroxybenzoate = 4-hydroxy-3-(all-trans-octaprenyl)benzoate + diphosphate. The protein operates within cofactor biosynthesis; ubiquinone biosynthesis. Functionally, catalyzes the prenylation of para-hydroxybenzoate (PHB) with an all-trans polyprenyl group. Mediates the second step in the final reaction sequence of ubiquinone-8 (UQ-8) biosynthesis, which is the condensation of the polyisoprenoid side chain with PHB, generating the first membrane-bound Q intermediate 3-octaprenyl-4-hydroxybenzoate. This is 4-hydroxybenzoate octaprenyltransferase from Shewanella baltica (strain OS155 / ATCC BAA-1091).